A 340-amino-acid chain; its full sequence is Arginase 1, mitochondrial (340 aa).

A mitochondrion-targeting transit peptide spans 1-24; it reads MGGVAAGTRWIHHVRRLSAAKVST. 4 residues coordinate Mn(2+): His159, Asp183, His185, and Asp187. Substrate-binding positions include 185-189 and 193-195; these read HPDIY and EGN. Mn(2+) is bound by residues Asp268 and Asp270. Substrate is bound at residue Glu311.

This sequence belongs to the arginase family. Requires Mn(2+) as cofactor.

It localises to the mitochondrion. It carries out the reaction L-arginine + H2O = urea + L-ornithine. It participates in nitrogen metabolism; urea cycle; L-ornithine and urea from L-arginine: step 1/1. Functionally, catalyzes the hydrolysis of L-arginine to urea and L-ornithine. The latter can be utilized in the urea cycle or as a precursor for the synthesis of both polyamines and proline. The sequence is that of Arginase 1, mitochondrial from Oryza sativa subsp. indica (Rice).